Reading from the N-terminus, the 441-residue chain is Homogentisate 1,2-dioxygenase (441 aa).

The active-site Proton acceptor is the H287. H330 and E336 together coordinate Fe cation. Homogentisate contacts are provided by Y345 and H366. Residue H366 participates in Fe cation binding.

Belongs to the homogentisate dioxygenase family. As to quaternary structure, hexamer; dimer of trimers. Fe cation serves as cofactor.

The enzyme catalyses homogentisate + O2 = 4-maleylacetoacetate + H(+). The protein operates within amino-acid degradation; L-phenylalanine degradation; acetoacetate and fumarate from L-phenylalanine: step 4/6. In terms of biological role, involved in the catabolism of homogentisate (2,5-dihydroxyphenylacetate or 2,5-OH-PhAc), a central intermediate in the degradation of phenylalanine and tyrosine. Catalyzes the oxidative ring cleavage of the aromatic ring of homogentisate to yield maleylacetoacetate. The protein is Homogentisate 1,2-dioxygenase of Xanthomonas oryzae pv. oryzae (strain MAFF 311018).